A 142-amino-acid polypeptide reads, in one-letter code: Large ribosomal subunit protein uL11 (142 aa).

It belongs to the universal ribosomal protein uL11 family. Part of the ribosomal stalk of the 50S ribosomal subunit. Interacts with L10 and the large rRNA to form the base of the stalk. L10 forms an elongated spine to which L12 dimers bind in a sequential fashion forming a multimeric L10(L12)X complex. Post-translationally, one or more lysine residues are methylated.

Forms part of the ribosomal stalk which helps the ribosome interact with GTP-bound translation factors. This chain is Large ribosomal subunit protein uL11, found in Hydrogenovibrio crunogenus (strain DSM 25203 / XCL-2) (Thiomicrospira crunogena).